The sequence spans 372 residues: Dual-specificity RNA methyltransferase RlmN (372 aa).

The Proton acceptor role is filled by E93. The region spanning 99-338 (EKDRATLCIS…VTVRKTRGDD (240 aa)) is the Radical SAM core domain. Residues C106 and C343 are joined by a disulfide bond. Positions 113, 117, and 120 each coordinate [4Fe-4S] cluster. S-adenosyl-L-methionine is bound by residues 167-168 (GE), S199, 221-223 (SLH), and N300. C343 functions as the S-methylcysteine intermediate in the catalytic mechanism.

The protein belongs to the radical SAM superfamily. RlmN family. The cofactor is [4Fe-4S] cluster.

The protein localises to the cytoplasm. The catalysed reaction is adenosine(2503) in 23S rRNA + 2 reduced [2Fe-2S]-[ferredoxin] + 2 S-adenosyl-L-methionine = 2-methyladenosine(2503) in 23S rRNA + 5'-deoxyadenosine + L-methionine + 2 oxidized [2Fe-2S]-[ferredoxin] + S-adenosyl-L-homocysteine. It catalyses the reaction adenosine(37) in tRNA + 2 reduced [2Fe-2S]-[ferredoxin] + 2 S-adenosyl-L-methionine = 2-methyladenosine(37) in tRNA + 5'-deoxyadenosine + L-methionine + 2 oxidized [2Fe-2S]-[ferredoxin] + S-adenosyl-L-homocysteine. In terms of biological role, specifically methylates position 2 of adenine 2503 in 23S rRNA and position 2 of adenine 37 in tRNAs. m2A2503 modification seems to play a crucial role in the proofreading step occurring at the peptidyl transferase center and thus would serve to optimize ribosomal fidelity. The polypeptide is Dual-specificity RNA methyltransferase RlmN (Psychromonas ingrahamii (strain DSM 17664 / CCUG 51855 / 37)).